The following is a 146-amino-acid chain: Vascular endothelial growth factor A (146 aa).

Residues 1-26 form the signal peptide; it reads MNFLLSWVHWSLALLLYLHHAKWSQA. Intrachain disulfides connect C51/C93, C82/C127, and C86/C129. N-linked (GlcNAc...) asparagine glycosylation is present at N100.

It belongs to the PDGF/VEGF growth factor family. As to quaternary structure, homodimer; disulfide-linked. Also found as heterodimer with PGF. Interacts with NRP1. Interacts with isoform 2 of BSG. Interacts with CD82; this interaction inhibits VEGFA-mediated signaling pathway.

Its function is as follows. Growth factor active in angiogenesis, vasculogenesis and endothelial cell growth. Induces endothelial cell proliferation, promotes cell migration, inhibits apoptosis and induces permeabilization of blood vessels. Binds to the FLT1/VEGFR1 and KDR/VEGFR2 receptors, heparan sulfate and heparin. Binding to NRP1 receptor initiates a signaling pathway needed for motor neuron axon guidance and cell body migration, including for the caudal migration of facial motor neurons from rhombomere 4 to rhombomere 6 during embryonic development. Also binds the DEAR/FBXW7-AS1 receptor. In Ovis aries (Sheep), this protein is Vascular endothelial growth factor A (VEGFA).